Reading from the N-terminus, the 389-residue chain is Na(+)/H(+) antiporter NhaA (389 aa).

The next 10 helical transmembrane spans lie at 8–28, 48–68, 91–111, 119–139, 173–193, 214–234, 262–282, 288–308, 327–347, and 361–381; these read INFL…ALVW, ISLH…MAAI, MATL…NALI, GWGI…RVVF, NPVA…AYLL, AGLY…VPFL, WKIF…GVEF, LTWL…FLMG, LLVA…VSGV, and GALF…VLGI.

This sequence belongs to the NhaA Na(+)/H(+) (TC 2.A.33) antiporter family.

Its subcellular location is the cell membrane. It carries out the reaction Na(+)(in) + 2 H(+)(out) = Na(+)(out) + 2 H(+)(in). In terms of biological role, na(+)/H(+) antiporter that extrudes sodium in exchange for external protons. The chain is Na(+)/H(+) antiporter NhaA from Desulfitobacterium hafniense (strain DSM 10664 / DCB-2).